The chain runs to 508 residues: Hydroxymethylglutaryl-CoA synthase, mitochondrial (508 aa).

Residues 1-37 (MQRLLAPARRVLQVKRAMQETSLTPAHLLSAAQQRFS) constitute a mitochondrion transit peptide. Position 52 is an N6-succinyllysine (lysine 52). (3S)-3-hydroxy-3-methylglutaryl-CoA contacts are provided by glutamate 80 and alanine 81. N6-acetyllysine; alternate occurs at positions 83 and 118. Lysine 83 and lysine 118 each carry N6-succinyllysine; alternate. Glutamate 132 serves as the catalytic Proton donor/acceptor. Positions 166, 204, and 208 each coordinate (3S)-3-hydroxy-3-methylglutaryl-CoA. Cysteine 166 serves as the catalytic Acyl-thioester intermediate. At lysine 221 the chain carries N6-succinyllysine. Lysine 243 is subject to N6-acetyllysine. Lysine 256 carries the post-translational modification N6-acetyllysine; alternate. Lysine 256 bears the N6-succinyllysine; alternate mark. Positions 258 and 301 each coordinate (3S)-3-hydroxy-3-methylglutaryl-CoA. The active-site Proton donor/acceptor is histidine 301. Lysine 306 is modified (N6-acetyllysine). Lysine 310 lines the (3S)-3-hydroxy-3-methylglutaryl-CoA pocket. 2 positions are modified to N6-acetyllysine; alternate: lysine 310 and lysine 327. N6-succinyllysine; alternate is present on residues lysine 310 and lysine 327. Lysine 333 bears the N6-succinyllysine mark. 4 positions are modified to N6-acetyllysine; alternate: lysine 342, lysine 350, lysine 354, and lysine 358. Residues lysine 342, lysine 350, lysine 354, and lysine 358 each carry the N6-succinyllysine; alternate modification. (3S)-3-hydroxy-3-methylglutaryl-CoA is bound by residues asparagine 380 and serine 414. Residue lysine 427 is modified to N6-acetyllysine. Serine 433 bears the Phosphoserine mark. Lysine 437 carries the post-translational modification N6-acetyllysine. Serine 440 is modified (phosphoserine). Lysine 447 carries the post-translational modification N6-acetyllysine; alternate. Lysine 447 bears the N6-succinyllysine; alternate mark. Position 456 is a phosphoserine (serine 456). At lysine 473 the chain carries N6-acetyllysine; alternate. At lysine 473 the chain carries N6-succinyllysine; alternate. Serine 477 is modified (phosphoserine).

It belongs to the thiolase-like superfamily. HMG-CoA synthase family. As to quaternary structure, homodimer. In terms of processing, acetylation of Lys-427 is observed in liver mitochondria from fasted mice but not from fed mice. Succinylated. Desuccinylated by SIRT5. Succinylation, at least at Lys-83 and Lys-310, inhibits the enzymatic activity. Liver and kidney.

The protein localises to the mitochondrion. The enzyme catalyses acetoacetyl-CoA + acetyl-CoA + H2O = (3S)-3-hydroxy-3-methylglutaryl-CoA + CoA + H(+). Its pathway is metabolic intermediate biosynthesis; (R)-mevalonate biosynthesis; (R)-mevalonate from acetyl-CoA: step 2/3. Functionally, catalyzes the first irreversible step in ketogenesis, condensing acetyl-CoA to acetoacetyl-CoA to form HMG-CoA, which is converted by HMG-CoA reductase (HMGCR) into mevalonate. The sequence is that of Hydroxymethylglutaryl-CoA synthase, mitochondrial (Hmgcs2) from Mus musculus (Mouse).